The chain runs to 418 residues: Acetylornithine aminotransferase (418 aa).

Residues 116–117 (GA) and phenylalanine 149 contribute to the pyridoxal 5'-phosphate site. Position 152 (arginine 152) interacts with N(2)-acetyl-L-ornithine. 240–243 (DEVQ) contacts pyridoxal 5'-phosphate. Position 269 is an N6-(pyridoxal phosphate)lysine (lysine 269). A N(2)-acetyl-L-ornithine-binding site is contributed by serine 296. Residue threonine 297 participates in pyridoxal 5'-phosphate binding.

It belongs to the class-III pyridoxal-phosphate-dependent aminotransferase family. ArgD subfamily. Homodimer. Pyridoxal 5'-phosphate is required as a cofactor.

Its subcellular location is the cytoplasm. The catalysed reaction is N(2)-acetyl-L-ornithine + 2-oxoglutarate = N-acetyl-L-glutamate 5-semialdehyde + L-glutamate. Its pathway is amino-acid biosynthesis; L-arginine biosynthesis; N(2)-acetyl-L-ornithine from L-glutamate: step 4/4. The chain is Acetylornithine aminotransferase from Prochlorococcus marinus (strain MIT 9313).